Reading from the N-terminus, the 122-residue chain is Large ribosomal subunit protein uL14 (122 aa).

Belongs to the universal ribosomal protein uL14 family. In terms of assembly, part of the 50S ribosomal subunit. Forms a cluster with proteins L3 and L19. In the 70S ribosome, L14 and L19 interact and together make contacts with the 16S rRNA in bridges B5 and B8.

Functionally, binds to 23S rRNA. Forms part of two intersubunit bridges in the 70S ribosome. The chain is Large ribosomal subunit protein uL14 from Brachyspira hyodysenteriae (strain ATCC 49526 / WA1).